The sequence spans 206 residues: Large ribosomal subunit protein bL25 (206 aa).

Residues 184 to 206 (AEEAAAEVAEPEVIKKGKEEEEE) form a disordered region. Residues 195–206 (EVIKKGKEEEEE) are compositionally biased toward basic and acidic residues.

This sequence belongs to the bacterial ribosomal protein bL25 family. CTC subfamily. As to quaternary structure, part of the 50S ribosomal subunit; part of the 5S rRNA/L5/L18/L25 subcomplex. Contacts the 5S rRNA. Binds to the 5S rRNA independently of L5 and L18.

In terms of biological role, this is one of the proteins that binds to the 5S RNA in the ribosome where it forms part of the central protuberance. This is Large ribosomal subunit protein bL25 from Thermus thermophilus (strain ATCC BAA-163 / DSM 7039 / HB27).